The following is a 651-amino-acid chain: Histone-arginine methyltransferase CARM1 (651 aa).

An interaction with C9orf72 region spans residues 28 to 139; the sequence is ATVSVFPGAR…GHTLERSVFS (112 aa). In terms of domain architecture, SAM-dependent MTase PRMT-type spans 147 to 454; sequence AVQYFQFYGY…KRQSYDISIV (308 aa). Residues glutamine 160, arginine 169, glycine 193, and glutamate 215 each coordinate S-adenosyl-L-methionine. At serine 217 the chain carries Phosphoserine. Lysine 228 is covalently cross-linked (Glycyl lysine isopeptide (Lys-Gly) (interchain with G-Cter in ubiquitin)). 2 residues coordinate S-adenosyl-L-methionine: glutamate 244 and serine 272. The interval 347–380 is required for nuclear translocation; it reads RILMAKSVKYTVNFLEAKEGDLHRIEIPFKFHML. The segment at 500–651 is transactivation domain; it reads TGSTYNLSSG…IPTNTMHYGS (152 aa). Arginine 551 bears the Dimethylated arginine mark. Residues 581 to 617 are disordered; that stretch reads RSSYQWGPGRLRGHAGSSVPMTCPTGSSGAQGGGGSS.

The protein belongs to the class I-like SAM-binding methyltransferase superfamily. Protein arginine N-methyltransferase family. As to quaternary structure, homodimer. Interacts with NR1H4. Interacts with SNRPC. Interacts with the C-terminus of NCOA2/GRIP1, NCO3/ACTR and NCOA1/SRC1. Part of a complex consisting of CARM1, EP300/P300 and NCOA2/GRIP1. Interacts with FLII, TP53, myogenic factor MEF2, EP300/P300, TRIM24, CREBBP and CTNNB1. Interacts with RELA. Identified in a complex containing CARM1, TRIM24 and NCOA2/GRIP1. Interacts with NCOA3/SRC3. Interacts with SKP2. Interacts (via PH domain-like fold) with C9orf72. Interacts with PARP1; promoting PARP1 recruimtent to replication forks. Auto-methylated on Arg-551. Methylation enhances transcription coactivator activity. Methylation is required for its role in the regulation of pre-mRNA alternative splicing. In terms of processing, phosphorylation at Ser-217 interferes with S-adenosyl-L-methionine binding and strongly reduces methyltransferase activity. Phosphorylation at Ser-217 is strongly increased during mitosis, and decreases rapidly to a very low, basal level after entry into the G1 phase of the cell cycle. Phosphorylation at Ser-217 may promote location in the cytosol. Post-translationally, ubiquitinated by E3 ubiquitin-protein ligase complex containing FBXO9 at Lys-228; leading to proteasomal degradation. In terms of tissue distribution, isoform 1 is expressed at low levels in brain, liver and testis. As to expression, isoform 2 is highly expressed in brain, liver, skeletal muscle and testis. Isoform 3 is highly expressed in spleen, liver and kidney. In terms of tissue distribution, isoform 4 is expressed in spleen, liver and kidney.

Its subcellular location is the nucleus. It localises to the cytoplasm. The protein localises to the chromosome. It carries out the reaction L-arginyl-[protein] + 2 S-adenosyl-L-methionine = N(omega),N(omega)-dimethyl-L-arginyl-[protein] + 2 S-adenosyl-L-homocysteine + 2 H(+). Methylation of H3R17 (H3R17me) by CARM1 is stimulated by preacetylation of H3 'Lys-18' (H3K18ac) H3 'Lys-23' (H3K23ac) by EP300 and blocked by citrullination of H3 'Arg-17' (H3R17ci) by PADI4. Functionally, methylates (mono- and asymmetric dimethylation) the guanidino nitrogens of arginyl residues in several proteins involved in DNA packaging, transcription regulation, pre-mRNA splicing, and mRNA stability. Recruited to promoters upon gene activation together with histone acetyltransferases from EP300/P300 and p160 families, methylates histone H3 at 'Arg-17' (H3R17me), forming mainly asymmetric dimethylarginine (H3R17me2a), leading to activation of transcription via chromatin remodeling. During nuclear hormone receptor activation and TCF7L2/TCF4 activation, acts synergically with EP300/P300 and either one of the p160 histone acetyltransferases NCOA1/SRC1, NCOA2/GRIP1 and NCOA3/ACTR or CTNNB1/beta-catenin to activate transcription. During myogenic transcriptional activation, acts together with NCOA3/ACTR as a coactivator for MEF2C. During monocyte inflammatory stimulation, acts together with EP300/P300 as a coactivator for NF-kappa-B. Acts as a coactivator for PPARG, promotes adipocyte differentiation and the accumulation of brown fat tissue. Plays a role in the regulation of pre-mRNA alternative splicing by methylation of splicing factors. Also seems to be involved in p53/TP53 transcriptional activation. Methylates EP300/P300, both at 'Arg-2142', which may loosen its interaction with NCOA2/GRIP1, and at 'Arg-580' and 'Arg-604' in the KIX domain, which impairs its interaction with CREB and inhibits CREB-dependent transcriptional activation. Also methylates arginine residues in RNA-binding proteins PABPC1, ELAVL1 and ELAV4, which may affect their mRNA-stabilizing properties and the half-life of their target mRNAs. Acts as a transcriptional coactivator of ACACA/acetyl-CoA carboxylase by enriching H3R17 methylation at its promoter, thereby positively regulating fatty acid synthesis. Independently of its methyltransferase activity, involved in replication fork progression: promotes PARP1 recruitment to replication forks, leading to poly-ADP-ribosylation of chromatin at replication forks and reduced fork speed. Isoform 3 specifically affects pre-mRNA splicing. This activity is independent from methyltransferase activity. The polypeptide is Histone-arginine methyltransferase CARM1 (Carm1) (Rattus norvegicus (Rat)).